The sequence spans 1085 residues: Solute carrier family 12 member 4 (1085 aa).

At 1–119 the chain is on the cytoplasmic side; that stretch reads MPHFTVVPVD…RRAAKAPSMG (119 aa). 4 positions are modified to phosphoserine: S24, S47, S81, and S88. A discontinuously helical transmembrane segment spans residues 120 to 141; the sequence is TLMGVYLPCLQNIFGVILFLRL. Positions 131 and 132 each coordinate K(+). The Extracellular portion of the chain corresponds to 142 to 149; that stretch reads TWMVGTAG. A helical transmembrane segment spans residues 150–172; that stretch reads VLQALLIVLICCCCTLLTAISMS. Residues 173-196 lie on the Cytoplasmic side of the membrane; the sequence is AIATNGVVPAGGSYFMISRSLGPE. A helical membrane pass occupies residues 197–225; that stretch reads FGGAVGLCFYLGTTFAAAMYILGAIEILL. Y216 contacts K(+). The Extracellular segment spans residues 226–248; it reads TYIAPPAAIFYPSGTHDMSSATL. 2 helical membrane passes run 249-271 and 272-297; these read NNMR…VGVK and YVNK…GGIK. Topologically, residues 298–419 are extracellular; sequence SIFDPPVFPV…LYVVADIATS (122 aa). C308 and C323 form a disulfide bridge. Residues N312, N331, and N347 are each glycosylated (N-linked (GlcNAc...) asparagine). An intrachain disulfide couples C343 to C353. The helical transmembrane segment at 420-440 threads the bilayer; that stretch reads FTVLVGIFFPSVTGIMAGSNR. Residues P429 and T432 each contribute to the K(+) site. Residues G433, I434, and M435 each contribute to the chloride site. Residues 441–450 are Cytoplasmic-facing; it reads SGDLRDAQKS. A helical membrane pass occupies residues 451–473; the sequence is IPVGTILAIVTTSLVYFSSVILF. Over 474 to 504 the chain is Extracellular; that stretch reads GACIEGVVLRDKYGDGVSRNLVVGTLAWPSP. Residues 505–531 traverse the membrane as a helical segment; it reads WVIVVGSFFSTCGAGLQSLTGAPRLLQ. At 532 to 554 the chain is on the cytoplasmic side; sequence AIAKDNIIPFLRVFGHGKANGEP. 2 helical membrane-spanning segments follow: residues 555 to 575 and 576 to 598; these read TWAL…ASLD and MVAP…ACAV. Y589 serves as a coordination point for chloride. Topologically, residues 599–612 are cytoplasmic; it reads QTLLRTPNWRPRFK. Helical transmembrane passes span 613 to 635 and 636 to 651; these read YYHW…VSSW and YYAL…IYKY. Residues 652–1085 lie on the Cytoplasmic side of the membrane; that stretch reads IEYQGAEKEW…GGREVITIYS (434 aa). Residues 665-681 are scissor helix; the sequence is IRGLSLSAARYALLRLE. L697, K699, K707, Y708, and V730 together coordinate ATP. Phosphoserine is present on S734. 3 residues coordinate ATP: G794, W795, and Y797. 2 positions are modified to phosphoserine: S916 and S967. T983 carries the post-translational modification Phosphothreonine. S1050 is modified (phosphoserine).

It belongs to the SLC12A transporter family. K/Cl co-transporter subfamily. Homodimer; adopts a domain-swap conformation at the scissor helices connecting the transmembrane domain and C-terminal domain. Heterodimer with other K-Cl cotransporters. Post-translationally, phosphorylated, phosphorylation may regulate transporter activity. In terms of tissue distribution, detected in embryo, adult heart, erythrocytes, brain, kidney, stomach, ovary, testis and liver.

It localises to the cell membrane. It catalyses the reaction K(+)(in) + chloride(in) = K(+)(out) + chloride(out). With respect to regulation, inhibited by WNK3. In terms of biological role, mediates electroneutral potassium-chloride cotransport when activated by cell swelling. May contribute to cell volume homeostasis in single cells. May be involved in the regulation of basolateral Cl(-) exit in NaCl absorbing epithelia. This is Solute carrier family 12 member 4 (Slc12a4) from Mus musculus (Mouse).